The following is a 578-amino-acid chain: NADH-quinone oxidoreductase subunit C/D (578 aa).

Residues 1 to 167 (MILSLFKLFG…DEFYFTKQKE (167 aa)) form an NADH dehydrogenase I subunit C region. The interval 192–578 (EYMFLNFGPN…IDFVMSDVDR (387 aa)) is NADH dehydrogenase I subunit D.

It in the N-terminal section; belongs to the complex I 30 kDa subunit family. This sequence in the C-terminal section; belongs to the complex I 49 kDa subunit family. As to quaternary structure, NDH-1 is composed of 13 different subunits. Subunits NuoB, CD, E, F, and G constitute the peripheral sector of the complex.

The protein resides in the cell inner membrane. The enzyme catalyses a quinone + NADH + 5 H(+)(in) = a quinol + NAD(+) + 4 H(+)(out). NDH-1 shuttles electrons from NADH, via FMN and iron-sulfur (Fe-S) centers, to quinones in the respiratory chain. The immediate electron acceptor for the enzyme in this species is believed to be ubiquinone. Couples the redox reaction to proton translocation (for every two electrons transferred, four hydrogen ions are translocated across the cytoplasmic membrane), and thus conserves the redox energy in a proton gradient. In Buchnera aphidicola subsp. Cinara cedri (strain Cc), this protein is NADH-quinone oxidoreductase subunit C/D.